The primary structure comprises 52 residues: UPF0391 membrane protein XCV0245 (52 aa).

A run of 2 helical transmembrane segments spans residues 5–25 and 27–47; these read AIIFFVIAIIAAVLGFSGIAG and ATNIAWILFVVFLILAVISMF.

This sequence belongs to the UPF0391 family.

The protein localises to the cell membrane. This is UPF0391 membrane protein XCV0245 from Xanthomonas euvesicatoria pv. vesicatoria (strain 85-10) (Xanthomonas campestris pv. vesicatoria).